The primary structure comprises 515 residues: C-glycoside 3-oxidase (515 aa).

E41 is a binding site for FAD. Basic and acidic residues predominate over residues E62–V82. The interval E62–Q90 is disordered. The FAD site is built by S118, N120, M124, T129, A131, and V237. H444 acts as the Proton acceptor in catalysis. The FAD site is built by N478 and T490.

This sequence belongs to the GMC oxidoreductase family. Monomer. The cofactor is FAD.

The catalysed reaction is isoorientin + O2 = 3''-dehydroisoorientin + H2O2. It catalyses the reaction mangiferin + O2 = 3'-dehydromangiferin + H2O2. Functionally, FAD-dependent C-glycoside-metabolizing enzyme that participates in the degradation of certain C-glycosides by catalyzing the oxidation of the hydroxyl group at the C3 position of the sugar moiety. Shows oxidase activity toward C-glycosides such as isoorientin and mangiferin but cannot use carminic acid, puerarin, orientin or aloesin. Shows weak activity (100 to 1000-fold lower) with O-glycosides. Probably plays a crucial role in the metabolism of C-glycosides in nature. This is C-glycoside 3-oxidase from Microbacterium trichothecenolyticum (Aureobacterium trichothecenolyticum).